We begin with the raw amino-acid sequence, 1199 residues long: Pyruvate-flavodoxin oxidoreductase (1199 aa).

2 4Fe-4S ferredoxin-type domains span residues 699-728 (EIPVWDTDICVQCSKCVMVCPHAAIRAKVY) and 755-784 (FTIQVAPEDCTGCAICVNVCPAKNKSEPSL). Positions 708, 711, 714, 718, 764, 767, 770, 774, 838, 841, 866, and 1103 each coordinate [4Fe-4S] cluster.

The protein belongs to the pyruvate:ferredoxin/flavodoxin oxidoreductase family. [4Fe-4S] cluster serves as cofactor.

It carries out the reaction oxidized [flavodoxin] + pyruvate + CoA + 2 H(+) = reduced [flavodoxin] + acetyl-CoA + CO2. In terms of biological role, oxidoreductase required for the transfer of electrons from pyruvate to flavodoxin, which reduces nitrogenase. This chain is Pyruvate-flavodoxin oxidoreductase (nifJ), found in Nostoc sp. (strain PCC 7120 / SAG 25.82 / UTEX 2576).